A 204-amino-acid polypeptide reads, in one-letter code: Large ribosomal subunit protein eL15 (204 aa).

The segment at 161 to 180 (MRGLTSAGKKSRGLGKGHKF) is disordered. Over residues 169–180 (KKSRGLGKGHKF) the composition is skewed to basic residues.

This sequence belongs to the eukaryotic ribosomal protein eL15 family. In terms of assembly, component of the large ribosomal subunit.

The protein localises to the cytoplasm. Component of the large ribosomal subunit. The ribosome is a large ribonucleoprotein complex responsible for the synthesis of proteins in the cell. The protein is Large ribosomal subunit protein eL15 (rpl15) of Ictalurus punctatus (Channel catfish).